We begin with the raw amino-acid sequence, 206 residues long: Small ribosomal subunit protein uS4 (206 aa).

Positions 96-156 (CRLDNVVYRM…EKSSNQLRIV (61 aa)) constitute an S4 RNA-binding domain.

It belongs to the universal ribosomal protein uS4 family. As to quaternary structure, part of the 30S ribosomal subunit. Contacts protein S5. The interaction surface between S4 and S5 is involved in control of translational fidelity.

Its function is as follows. One of the primary rRNA binding proteins, it binds directly to 16S rRNA where it nucleates assembly of the body of the 30S subunit. With S5 and S12 plays an important role in translational accuracy. This chain is Small ribosomal subunit protein uS4, found in Pseudomonas putida (strain W619).